The following is a 120-amino-acid chain: Large ribosomal subunit protein uL18 (120 aa).

The protein belongs to the universal ribosomal protein uL18 family. Part of the 50S ribosomal subunit; part of the 5S rRNA/L5/L18/L25 subcomplex. Contacts the 5S and 23S rRNAs.

Its function is as follows. This is one of the proteins that bind and probably mediate the attachment of the 5S RNA into the large ribosomal subunit, where it forms part of the central protuberance. This is Large ribosomal subunit protein uL18 from Clostridium botulinum (strain Eklund 17B / Type B).